The sequence spans 406 residues: COP9 signalosome complex subunit 4 (406 aa).

The region spanning 197 to 366 (YRRKFIEAAQ…GIVHFETREP (170 aa)) is the PCI domain.

The protein belongs to the CSN4 family. In terms of assembly, component of the CSN complex, probably composed of cops1, cops2, cops3, cops4, cops5, cops6, cops7, cops8 and cops9.

It localises to the cytoplasm. It is found in the nucleus. The protein resides in the cytoplasmic vesicle. Its subcellular location is the secretory vesicle. The protein localises to the synaptic vesicle. Functionally, component of the COP9 signalosome complex (CSN), a complex involved in various cellular and developmental processes. The CSN complex is an essential regulator of the ubiquitin (Ubl) conjugation pathway by mediating the deneddylation of the cullin subunits of E3 ligase complexes, leading to modify the Ubl ligase activity. This is COP9 signalosome complex subunit 4 (cops4) from Danio rerio (Zebrafish).